A 406-amino-acid polypeptide reads, in one-letter code: Phosphatidylserine decarboxylase proenzyme, mitochondrial (406 aa).

The N-terminal 49 residues, Met1–Lys49, are a transit peptide targeting the mitochondrion. Over Val50–Leu60 the chain is Mitochondrial matrix. The helical transmembrane segment at Leu61–Gln79 threads the bilayer. At Tyr80–Leu406 the chain is on the mitochondrial intermembrane side. Residues Asp188, His264, and Ser375 each act as charge relay system; for autoendoproteolytic cleavage activity in the active site. The active-site Schiff-base intermediate with substrate; via pyruvic acid; for decarboxylase activity is the Ser375. Ser375 is modified (pyruvic acid (Ser); by autocatalysis).

Belongs to the phosphatidylserine decarboxylase family. PSD-B subfamily. Eukaryotic type I sub-subfamily. As to quaternary structure, heterodimer of a large membrane-associated beta subunit and a small pyruvoyl-containing alpha subunit. It depends on pyruvate as a cofactor. Post-translationally, is synthesized initially as an inactive proenzyme. Formation of the active enzyme involves a self-maturation process in which the active site pyruvoyl group is generated from an internal serine residue via an autocatalytic post-translational modification. Two non-identical subunits are generated from the proenzyme in this reaction, and the pyruvate is formed at the N-terminus of the alpha chain, which is derived from the carboxyl end of the proenzyme. The autoendoproteolytic cleavage occurs by a canonical serine protease mechanism, in which the side chain hydroxyl group of the serine supplies its oxygen atom to form the C-terminus of the beta chain, while the remainder of the serine residue undergoes an oxidative deamination to produce ammonia and the pyruvoyl prosthetic group on the alpha chain. During this reaction, the Ser that is part of the protease active site of the proenzyme becomes the pyruvoyl prosthetic group, which constitutes an essential element of the active site of the mature decarboxylase.

The protein resides in the mitochondrion inner membrane. It is found in the cytoplasm. Its subcellular location is the lipid droplet. It carries out the reaction a 1,2-diacyl-sn-glycero-3-phospho-L-serine + H(+) = a 1,2-diacyl-sn-glycero-3-phosphoethanolamine + CO2. It participates in phospholipid metabolism; phosphatidylethanolamine biosynthesis. With respect to regulation, inhibited by hydroxylamine. Catalyzes the formation of phosphatidylethanolamine (PtdEtn) from phosphatidylserine (PtdSer). Plays a central role in phospholipid metabolism and in the interorganelle trafficking of phosphatidylserine. May be involved in lipid droplet biogenesis at the endoplasmic reticulum membrane. This chain is Phosphatidylserine decarboxylase proenzyme, mitochondrial, found in Rattus norvegicus (Rat).